The primary structure comprises 286 residues: MTIRFDNVSYTYQKGTPYQHQAIHDVNTEFEQGKYYAIVGQTGSGKSTLIQNINALLKPTTGTVTVDDITITHKTKDKYIRPVRKRIGMVFQFPESQLFEDTVEREMIFGPKNFKMNLDEAKNYAHRLLMDLGFSRDVMSQSPFQMSGGQMRKIAIVSILAMNPDIIVVDEPTAGLDPQSKRQVMRLLKSLQTDENKAIILISHDMNEVARYADEVIVMKEGSIVSQTSPKELFKDKEKLADWHIALPEIVQLQYDFEQKHQTKLKDIALTEEAFVSLYKEWQHEK.

The ABC transporter domain maps to 3-246 (IRFDNVSYTY…KEKLADWHIA (244 aa)). 40-47 (GQTGSGKS) lines the ATP pocket.

The protein belongs to the ABC transporter superfamily. Energy-coupling factor EcfA family. Forms a stable energy-coupling factor (ECF) transporter complex composed of 2 membrane-embedded substrate-binding proteins (S component), 2 ATP-binding proteins (A component) and 2 transmembrane proteins (T component).

Its subcellular location is the cell membrane. In terms of biological role, ATP-binding (A) component of a common energy-coupling factor (ECF) ABC-transporter complex. Unlike classic ABC transporters this ECF transporter provides the energy necessary to transport a number of different substrates. The chain is Energy-coupling factor transporter ATP-binding protein EcfA2 from Staphylococcus aureus (strain bovine RF122 / ET3-1).